The sequence spans 644 residues: Fructose-1,6-bisphosphatase class 3 (644 aa).

Belongs to the FBPase class 3 family. It depends on Mn(2+) as a cofactor.

It carries out the reaction beta-D-fructose 1,6-bisphosphate + H2O = beta-D-fructose 6-phosphate + phosphate. Its pathway is carbohydrate biosynthesis; gluconeogenesis. This is Fructose-1,6-bisphosphatase class 3 from Oceanobacillus iheyensis (strain DSM 14371 / CIP 107618 / JCM 11309 / KCTC 3954 / HTE831).